Here is a 260-residue protein sequence, read N- to C-terminus: Phosphate import ATP-binding protein PstB 5 (260 aa).

An ABC transporter domain is found at 9 to 255 (IKVKDLSFYY…PLDSRTRDYV (247 aa)). 41 to 48 (GPSGCGKS) is a binding site for ATP.

Belongs to the ABC transporter superfamily. Phosphate importer (TC 3.A.1.7) family. As to quaternary structure, the complex is composed of two ATP-binding proteins (PstB), two transmembrane proteins (PstC and PstA) and a solute-binding protein (PstS).

Its subcellular location is the cell inner membrane. The enzyme catalyses phosphate(out) + ATP + H2O = ADP + 2 phosphate(in) + H(+). Functionally, part of the ABC transporter complex PstSACB involved in phosphate import. Responsible for energy coupling to the transport system. This chain is Phosphate import ATP-binding protein PstB 5, found in Trichormus variabilis (strain ATCC 29413 / PCC 7937) (Anabaena variabilis).